The following is a 161-amino-acid chain: Nucleotide-binding protein XCV3791 (161 aa).

This sequence belongs to the YajQ family.

Its function is as follows. Nucleotide-binding protein. This is Nucleotide-binding protein XCV3791 from Xanthomonas euvesicatoria pv. vesicatoria (strain 85-10) (Xanthomonas campestris pv. vesicatoria).